We begin with the raw amino-acid sequence, 559 residues long: Protein NRT1/ PTR FAMILY 2.8 (559 aa).

A run of 11 helical transmembrane segments spans residues 57 to 77 (GVFL…LTLA), 92 to 112 (LLLG…TAAL), 132 to 152 (KWQL…AGGV), 178 to 198 (FFNW…TGVV), 206 to 226 (WVIG…TFVI), 321 to 341 (LKCV…FILT), 374 to 394 (VSMI…IPIV), 404 to 424 (LTLK…VAGF), 437 to 457 (GSFV…LAGL), 481 to 501 (VAGA…TLLI), and 529 to 549 (YFFI…LFAS).

It belongs to the major facilitator superfamily. Proton-dependent oligopeptide transporter (POT/PTR) (TC 2.A.17) family. Expressed in flowers.

The protein localises to the membrane. The sequence is that of Protein NRT1/ PTR FAMILY 2.8 (NPF2.8) from Arabidopsis thaliana (Mouse-ear cress).